The chain runs to 1300 residues: Serine protease EspP (1300 aa).

Positions Met-1–Ala-55 are cleaved as a signal peptide. The Peptidase S6 domain occupies Gln-57–Asn-311. Residues His-127, Asp-156, and Ser-263 each act as charge relay system in the active site. Residues Asp-1034–Phe-1300 enclose the Autotransporter domain.

Cleaved to release the mature protein from the outer membrane.

It localises to the periplasm. The protein resides in the secreted. It is found in the cell surface. The protein localises to the cell outer membrane. Functionally, serine protease with cytotoxic effect. Disrupts actin cytoskeleton resulting cell detachment in vitro. The polypeptide is Serine protease EspP (espP) (Escherichia coli).